A 517-amino-acid polypeptide reads, in one-letter code: MSKKKENPFSFFSYVKDESDTSSLPPPPAPIHSPSSSDNIEIPLPVFNNNNNNNNTTTTNNNTNNSNTSTSNNSKNNRKTAISFDDDDDDGDEEDEEEEDDDDDDDDDDDETNNIKSSLPQLQPQTQPQPQPQPQPQPQPPIKPTITKATPINKNVNKEINNNNNNNNNNNNTTTTTINNINNIATSANNAGTTTSKKKLIQLFDDDDTNYDDEEKLEKFDRSTPMSLPKEIPKKVSSTLSNSFDPNIIHNQSSPPPPPISIPIPLPTTDNLNNINSNNNNNNNNNNNNNNNNNNNNNNNNNNNNNNNNNNNNNNNNSNIAPPPPSSSSMVNNVNNNSSDNSSSNNNEENENLKAEITKLKTLIKGLKIQCIKYKGDKELSESKLLQSENRLEQFKLKEANETKIMEDMVAQVEENLNAMKKRAQYAENQVEQMKQEIQQLRHQNQQNSMNNPEMQELRYRLQDAKEKGRMVSQLLFQASNDADLNIKNLMRGIETLQNVSALLFSIDKISTIPNQK.

3 disordered regions span residues 16 to 148 (KDES…TITK), 156 to 175 (VNKEINNNNNNNNNNNNTTT), and 216 to 351 (KLEK…EENE). Residues 48–75 (NNNNNNNNTTTTNNNTNNSNTSTSNNSK) are compositionally biased toward low complexity. Residues 84–112 (FDDDDDDGDEEDEEEEDDDDDDDDDDDET) show a composition bias toward acidic residues. Residues 127 to 143 (QPQPQPQPQPQPQPPIK) show a composition bias toward pro residues. Residues 236 to 252 (VSSTLSNSFDPNIIHNQ) are compositionally biased toward polar residues. Positions 254–266 (SPPPPPISIPIPL) are enriched in pro residues. Composition is skewed to low complexity over residues 271 to 320 (NLNN…NSNI) and 327 to 347 (SSSMVNNVNNNSSDNSSSNNN). Residues 340-452 (DNSSSNNNEE…HQNQQNSMNN (113 aa)) are a coiled coil.

It belongs to the ENTR1 family.

This is an uncharacterized protein from Dictyostelium discoideum (Social amoeba).